The sequence spans 109 residues: Small ribosomal subunit protein uS10 (109 aa).

It belongs to the universal ribosomal protein uS10 family. As to quaternary structure, part of the 30S ribosomal subunit.

In terms of biological role, involved in the binding of tRNA to the ribosomes. In Nanoarchaeum equitans (strain Kin4-M), this protein is Small ribosomal subunit protein uS10.